A 220-amino-acid chain; its full sequence is RNA-free ribonuclease P (220 aa).

It belongs to the HARP family.

It carries out the reaction Endonucleolytic cleavage of RNA, removing 5'-extranucleotides from tRNA precursor.. RNA-free RNase P that catalyzes the removal of the 5'-leader sequence from pre-tRNA to produce the mature 5'-terminus. The polypeptide is RNA-free ribonuclease P (Methanothermobacter thermautotrophicus (strain ATCC 29096 / DSM 1053 / JCM 10044 / NBRC 100330 / Delta H) (Methanobacterium thermoautotrophicum)).